The primary structure comprises 312 residues: Protoheme IX farnesyltransferase (312 aa).

9 helical membrane-spanning segments follow: residues 29-49 (VMSL…GHMN), 50-70 (PVLA…SGAL), 90-110 (IPAG…LSAF), 117-137 (LMVN…YAVI), 150-170 (IVIG…AATG), 177-197 (LVLF…LSLF), 223-243 (ALFY…MGFA), 246-266 (FYGV…WRLW), and 292-312 (IFAV…FGVF).

This sequence belongs to the UbiA prenyltransferase family. Protoheme IX farnesyltransferase subfamily.

Its subcellular location is the cell inner membrane. The catalysed reaction is heme b + (2E,6E)-farnesyl diphosphate + H2O = Fe(II)-heme o + diphosphate. It participates in porphyrin-containing compound metabolism; heme O biosynthesis; heme O from protoheme: step 1/1. In terms of biological role, converts heme B (protoheme IX) to heme O by substitution of the vinyl group on carbon 2 of heme B porphyrin ring with a hydroxyethyl farnesyl side group. The chain is Protoheme IX farnesyltransferase from Brucella melitensis biotype 1 (strain ATCC 23456 / CCUG 17765 / NCTC 10094 / 16M).